Here is a 100-residue protein sequence, read N- to C-terminus: Large ribosomal subunit protein bL21 (100 aa).

Belongs to the bacterial ribosomal protein bL21 family. Part of the 50S ribosomal subunit. Contacts protein L20.

This protein binds to 23S rRNA in the presence of protein L20. In Corynebacterium kroppenstedtii (strain DSM 44385 / JCM 11950 / CIP 105744 / CCUG 35717), this protein is Large ribosomal subunit protein bL21.